Reading from the N-terminus, the 233-residue chain is Ras-related protein RABA6a (233 aa).

GTP is bound at residue 20-27 (GDSAVGKS). An Effector region motif is present at residues 42-50 (SKPTIGVEF). GTP-binding positions include 68–72 (DTAGQ), 126–129 (NKSD), and 156–157 (SA). S-geranylgeranyl cysteine attachment occurs at residues cysteine 230 and cysteine 231.

This sequence belongs to the small GTPase superfamily. Rab family.

The protein localises to the cell membrane. In terms of biological role, intracellular vesicle trafficking and protein transport. This Arabidopsis thaliana (Mouse-ear cress) protein is Ras-related protein RABA6a (RABA6A).